The following is a 331-amino-acid chain: D-galactose/methyl-galactoside binding periplasmic protein MglB (331 aa).

The N-terminal stretch at 1–24 (MKKTAVLSTVAFAIALGSASASFA) is a signal peptide. Beta-D-galactose is bound by residues D38 and N115. Residues D38 and N115 each coordinate beta-D-glucose. Ca(2+) is bound by residues D158, N160, D162, K164, and Q166. Residues H176, D178, and R182 each contribute to the beta-D-galactose site. 3 residues coordinate beta-D-glucose: H176, D178, and R182. Ca(2+) is bound at residue E229. Residues N235, D259, and N279 each coordinate beta-D-galactose. Beta-D-glucose contacts are provided by N235, D259, and N279.

This sequence belongs to the bacterial solute-binding protein 2 family. The ABC transporter complex is composed of one ATP-binding protein (MglA), two transmembrane proteins (MglC) and a solute-binding protein (MglB).

Its subcellular location is the periplasm. Its function is as follows. Part of the ABC transporter complex MglABC involved in galactose/methyl galactoside import. This Haemophilus influenzae (strain ATCC 51907 / DSM 11121 / KW20 / Rd) protein is D-galactose/methyl-galactoside binding periplasmic protein MglB (mglB).